Reading from the N-terminus, the 318-residue chain is Transaldolase (318 aa).

Lys-132 (schiff-base intermediate with substrate) is an active-site residue.

Belongs to the transaldolase family. Type 1 subfamily. As to quaternary structure, homodimer.

It localises to the cytoplasm. It catalyses the reaction D-sedoheptulose 7-phosphate + D-glyceraldehyde 3-phosphate = D-erythrose 4-phosphate + beta-D-fructose 6-phosphate. The protein operates within carbohydrate degradation; pentose phosphate pathway; D-glyceraldehyde 3-phosphate and beta-D-fructose 6-phosphate from D-ribose 5-phosphate and D-xylulose 5-phosphate (non-oxidative stage): step 2/3. Functionally, transaldolase is important for the balance of metabolites in the pentose-phosphate pathway. The sequence is that of Transaldolase from Shewanella woodyi (strain ATCC 51908 / MS32).